The chain runs to 388 residues: Mannitol-1-phosphate 5-dehydrogenase (388 aa).

4–15 contributes to the NAD(+) binding site; it reads AVHFGAGNIGRG.

The protein belongs to the mannitol dehydrogenase family.

The catalysed reaction is D-mannitol 1-phosphate + NAD(+) = beta-D-fructose 6-phosphate + NADH + H(+). This Thermoanaerobacter pseudethanolicus (strain ATCC 33223 / 39E) (Clostridium thermohydrosulfuricum) protein is Mannitol-1-phosphate 5-dehydrogenase.